The primary structure comprises 88 residues: Small ribosomal subunit protein bS20 (88 aa).

This sequence belongs to the bacterial ribosomal protein bS20 family.

Its function is as follows. Binds directly to 16S ribosomal RNA. The chain is Small ribosomal subunit protein bS20 from Maricaulis maris (strain MCS10) (Caulobacter maris).